Here is a 244-residue protein sequence, read N- to C-terminus: Large ribosomal subunit protein uL30B (244 aa).

Over residues 1–11 (MSTEKILTPES) the composition is skewed to polar residues. Positions 1–21 (MSTEKILTPESQLKKTKAQQK) are disordered.

Belongs to the universal ribosomal protein uL30 family. In terms of assembly, component of the large ribosomal subunit (LSU). Mature yeast ribosomes consist of a small (40S) and a large (60S) subunit. The 40S small subunit contains 1 molecule of ribosomal RNA (18S rRNA) and 33 different proteins (encoded by 57 genes). The large 60S subunit contains 3 rRNA molecules (25S, 5.8S and 5S rRNA) and 46 different proteins (encoded by 81 genes).

It is found in the cytoplasm. Its function is as follows. Component of the ribosome, a large ribonucleoprotein complex responsible for the synthesis of proteins in the cell. The small ribosomal subunit (SSU) binds messenger RNAs (mRNAs) and translates the encoded message by selecting cognate aminoacyl-transfer RNA (tRNA) molecules. The large subunit (LSU) contains the ribosomal catalytic site termed the peptidyl transferase center (PTC), which catalyzes the formation of peptide bonds, thereby polymerizing the amino acids delivered by tRNAs into a polypeptide chain. The nascent polypeptides leave the ribosome through a tunnel in the LSU and interact with protein factors that function in enzymatic processing, targeting, and the membrane insertion of nascent chains at the exit of the ribosomal tunnel. In Saccharomyces cerevisiae (strain ATCC 204508 / S288c) (Baker's yeast), this protein is Large ribosomal subunit protein uL30B.